A 495-amino-acid chain; its full sequence is Aspartyl/glutamyl-tRNA(Asn/Gln) amidotransferase subunit B (495 aa).

This sequence belongs to the GatB/GatE family. GatB subfamily. Heterotrimer of A, B and C subunits.

The catalysed reaction is L-glutamyl-tRNA(Gln) + L-glutamine + ATP + H2O = L-glutaminyl-tRNA(Gln) + L-glutamate + ADP + phosphate + H(+). It carries out the reaction L-aspartyl-tRNA(Asn) + L-glutamine + ATP + H2O = L-asparaginyl-tRNA(Asn) + L-glutamate + ADP + phosphate + 2 H(+). In terms of biological role, allows the formation of correctly charged Asn-tRNA(Asn) or Gln-tRNA(Gln) through the transamidation of misacylated Asp-tRNA(Asn) or Glu-tRNA(Gln) in organisms which lack either or both of asparaginyl-tRNA or glutaminyl-tRNA synthetases. The reaction takes place in the presence of glutamine and ATP through an activated phospho-Asp-tRNA(Asn) or phospho-Glu-tRNA(Gln). This Beijerinckia indica subsp. indica (strain ATCC 9039 / DSM 1715 / NCIMB 8712) protein is Aspartyl/glutamyl-tRNA(Asn/Gln) amidotransferase subunit B.